The primary structure comprises 457 residues: 11S globulin seed storage protein Ana o 2.0101 (457 aa).

Positions 1 to 14 are cleaved as a signal peptide; that stretch reads LSVCFLILFHGCLA. The igE-binding stretch occupies residues 15–29; sequence SRQEWQQQDECQIDR. Cystine bridges form between C25–C58 and C101–C278. 2 conformational epitope; mouse monoclonal antibody (mAb) 2B5-binding regions span residues 29–37 and 31–48; these read RLDALEPDN and DALE…TVEA. Residues 30–220 enclose the Cupin type-1 1 domain; that stretch reads LDALEPDNRV…AFQVDERLIK (191 aa). Binds goat polyclonal antibodies (pAbs) regions lie at residues 32–45 and 55–86; these read ALEP…EAGT and QFRC…QLIY. The mouse monoclonal antibody (mAb) 2B5-binding stretch occupies residues 34-57; sequence EPDNRVEYEAGTVEAWDPNHEQFR. Residues 41-55 are mouse monoclonal antibody (mAb) 4H9-binding; that stretch reads YEAGTVEAWDPNHEQ. The interval 105–119 is igE-binding; sequence YQAPQQGRQQGQSGR. Residues 215–239 form a binds goat polyclonal antibodies (pAbs) region; the sequence is DERLIKQLKSEDNRGGIVKVKDDEL. The interval 233–252 is CD4(+) T cell-reactive epitope; the sequence is KVKDDELRVIRPSRSQSERG. A disordered region spans residues 243-270; the sequence is RPSRSQSERGSESEEESEDEKRRWGQRD. Positions 261 to 270 are enriched in basic and acidic residues; that stretch reads DEKRRWGQRD. The segment at 265 to 289 is linear epitope; mouse monoclonal antibody (mAb) 1F5-binding; sequence RWGQRDNGIEETICTMRLKENINDP. The NGXEET; peptidase recognition motif motif lies at 271–276; that stretch reads NGIEET. A Cupin type-1 2 domain is found at 284 to 433; sequence ENINDPARAD…AFQISREDAR (150 aa). CD4(+) T cell-reactive epitope regions lie at residues 289–308, 297–316, 321–340, 329–348, and 377–396; these read PARA…LNSL, PEVG…LKWL, EKGV…LNSH, ALVL…GCKG, and QNFA…ISFK. A binds goat polyclonal antibodies (pAbs), but buried in the 3D-structure model region spans residues 395–416; the sequence is FKTNDRAMTSPLAGRTSVLGGM.

The protein belongs to the 11S seed storage protein (globulins) family. Homotrimer. Hexamer. Each subunit is composed of an acidic and a basic chain derived from a single precursor and linked by a disulfide bond. Proteolytically processed from a single precursor to produce an acidic and a basic chain that are linked by a disulfide bond. Not glycosylated. In terms of tissue distribution, expressed in seed (at protein level). Expressed in the juice of the cashew apple (at protein level).

Seed storage protein. The sequence is that of 11S globulin seed storage protein Ana o 2.0101 from Anacardium occidentale (Cashew).